We begin with the raw amino-acid sequence, 476 residues long: NADH-quinone oxidoreductase subunit N (476 aa).

14 helical membrane-spanning segments follow: residues 10–30 (AVLP…IGAI), 42–62 (LAIA…AVTI), 77–97 (FMKV…VDWL), 108–128 (AVLV…GDLI), 129–149 (ALYL…AINR), 162–182 (FVLG…IYGF), 202–222 (LVFG…AVPF), 234–254 (PTPV…AVFV), 268–288 (WQQI…FAAI), 296–316 (LLAY…AAGT), 323–343 (VLLY…CVLA), 368–388 (ALAL…AGFV), 392–412 (YVFL…GVVA), and 445–465 (AVLA…TPLI).

Belongs to the complex I subunit 2 family. As to quaternary structure, NDH-1 is composed of 14 different subunits. Subunits NuoA, H, J, K, L, M, N constitute the membrane sector of the complex.

The protein localises to the cell inner membrane. It catalyses the reaction a quinone + NADH + 5 H(+)(in) = a quinol + NAD(+) + 4 H(+)(out). Functionally, NDH-1 shuttles electrons from NADH, via FMN and iron-sulfur (Fe-S) centers, to quinones in the respiratory chain. The immediate electron acceptor for the enzyme in this species is believed to be ubiquinone. Couples the redox reaction to proton translocation (for every two electrons transferred, four hydrogen ions are translocated across the cytoplasmic membrane), and thus conserves the redox energy in a proton gradient. The protein is NADH-quinone oxidoreductase subunit N of Azorhizobium caulinodans (strain ATCC 43989 / DSM 5975 / JCM 20966 / LMG 6465 / NBRC 14845 / NCIMB 13405 / ORS 571).